We begin with the raw amino-acid sequence, 384 residues long: MGIKGLTKLLSDYAPGCMREQKFEGYLDRKVAIDASMHIYQFMMVVGRSGEQQLTNEAGEVTSHLQGMFTRTLRMLKAGIKPVYVFDGKPPTMKGGELAKRKDKREAAESALEKAKEAGDQEEIEKLSKRTVRVSKVHSEEVMKLARFLGLPVFEAPCEAEATCAALCKAGLVYAAASEDMDTLCFSTPKLARNLMAPSSQEKPILEFDFDKLLAGLELTWDQFIDVCILCGCDYCDSIKGIGPVNALKYIKQYGNIEGLLEHLDKEKYPVPDDWPYKEARVLFKNPEVVQTDGLTLKWTAPDEEAVVAFLCGEKSFNEDRIRKQLADLKKARSQGGQNRLETFFGAATVKSSTVGKRKEPEKGKGKFGAAGGKKSKGVTKRKF.

The tract at residues 1–105 (MGIKGLTKLL…GELAKRKDKR (105 aa)) is N-domain. Mg(2+) is bound at residue D34. R71 is a DNA binding site. Positions 87, 159, 161, 180, and 182 each coordinate Mg(2+). The I-domain stretch occupies residues 123–254 (EIEKLSKRTV…VNALKYIKQY (132 aa)). E159 lines the DNA pocket. The DNA site is built by G232 and D234. D234 contributes to the Mg(2+) binding site. The interval 337 to 345 (GQNRLETFF) is interaction with PCNA. Positions 353–384 (STVGKRKEPEKGKGKFGAAGGKKSKGVTKRKF) are disordered. The span at 374 to 384 (KKSKGVTKRKF) shows a compositional bias: basic residues.

It belongs to the XPG/RAD2 endonuclease family. FEN1 subfamily. As to quaternary structure, interacts with PCNA. Three molecules of FEN1 bind to one PCNA trimer with each molecule binding to one PCNA monomer. PCNA stimulates the nuclease activity without altering cleavage specificity. Requires Mg(2+) as cofactor. Post-translationally, phosphorylated. Phosphorylation upon DNA damage induces relocalization to the nuclear plasma.

The protein localises to the nucleus. Its subcellular location is the nucleolus. It localises to the nucleoplasm. The protein resides in the mitochondrion. Its function is as follows. Structure-specific nuclease with 5'-flap endonuclease and 5'-3' exonuclease activities involved in DNA replication and repair. During DNA replication, cleaves the 5'-overhanging flap structure that is generated by displacement synthesis when DNA polymerase encounters the 5'-end of a downstream Okazaki fragment. It enters the flap from the 5'-end and then tracks to cleave the flap base, leaving a nick for ligation. Also involved in the long patch base excision repair (LP-BER) pathway, by cleaving within the apurinic/apyrimidinic (AP) site-terminated flap. Acts as a genome stabilization factor that prevents flaps from equilibrating into structures that lead to duplications and deletions. Also possesses 5'-3' exonuclease activity on nicked or gapped double-stranded DNA, and exhibits RNase H activity. Also involved in replication and repair of rDNA and in repairing mitochondrial DNA. This Micromonas commoda (strain RCC299 / NOUM17 / CCMP2709) (Picoplanktonic green alga) protein is Flap endonuclease 1.